A 477-amino-acid polypeptide reads, in one-letter code: MSQKFDVIVIGAGPGGYVAAIKSAQLGLKTALIEKYKGKEGKTALGGTCLNVGCIPSKALLDSSYKFHEAHESFKLHGISTGEVAIDVPTMIARKDQIVRNLTGGVASLIKANGVTLFEGHGKLLAGKKVEVTAADGSSQVLDTENVILASGSKPVEIPPAPVDQDVIVDSTGALDFQNVPGKLGVIGAGVIGLELGSVWARLGAEVTVLEAMDKFLPAVDEQVAKEAQKILTKQGLKILLGARVTGTEVKNKQVTVKFVDAEGEKSQAFDKLIVAVGRRPVTTDLLAADSGVTLDERGFIYVDDYCATSVPGVYAIGDVVRGAMLAHKASEEGVVVAERIAGHKAQMNYDLIPAVIYTHPEIAGVGKTEQALKAEGVAINVGVFPFAASGRAMAANDTAGFVKVIADAKTDRVLGVHVIGPSAAELVQQGAIAMEFGTSAEDLGMMVFAHPALSEALHEAALAVSGHAIHVANRKK.

FAD contacts are provided by residues 34–49 (EKYK…GGTC), K58, and G122. C49 and C54 are oxidised to a cystine. NAD(+) is bound by residues 188-192 (GAGVI), E211, V245, and 276-279 (AVGR). The FAD site is built by D319 and A327. Catalysis depends on H451, which acts as the Proton acceptor.

The protein belongs to the class-I pyridine nucleotide-disulfide oxidoreductase family. As to quaternary structure, homodimer. FAD serves as cofactor.

The protein resides in the cytoplasm. It catalyses the reaction N(6)-[(R)-dihydrolipoyl]-L-lysyl-[protein] + NAD(+) = N(6)-[(R)-lipoyl]-L-lysyl-[protein] + NADH + H(+). In terms of biological role, the pyruvate dehydrogenase complex catalyzes the overall conversion of pyruvate to acetyl-CoA and CO(2). It contains multiple copies of three enzymatic components: pyruvate dehydrogenase (E1), dihydrolipoamide acetyltransferase (E2) and lipoamide dehydrogenase (E3). This Azotobacter vinelandii protein is Dihydrolipoyl dehydrogenase.